The following is a 517-amino-acid chain: GMP synthase [glutamine-hydrolyzing] (517 aa).

The Glutamine amidotransferase type-1 domain occupies K11–N202. The active-site Nucleophile is C88. Catalysis depends on residues H176 and E178. The region spanning W203–R392 is the GMPS ATP-PPase domain. Residue S230 to S236 participates in ATP binding.

As to quaternary structure, homodimer.

It carries out the reaction XMP + L-glutamine + ATP + H2O = GMP + L-glutamate + AMP + diphosphate + 2 H(+). Its pathway is purine metabolism; GMP biosynthesis; GMP from XMP (L-Gln route): step 1/1. In terms of biological role, catalyzes the synthesis of GMP from XMP. This Lacticaseibacillus rhamnosus (Lactobacillus rhamnosus) protein is GMP synthase [glutamine-hydrolyzing] (guaA).